Consider the following 475-residue polypeptide: 3-isopropylmalate dehydratase large subunit 1 (475 aa).

[4Fe-4S] cluster is bound by residues Cys-353, Cys-413, and Cys-416.

Belongs to the aconitase/IPM isomerase family. LeuC type 1 subfamily. As to quaternary structure, heterodimer of LeuC and LeuD. It depends on [4Fe-4S] cluster as a cofactor.

The enzyme catalyses (2R,3S)-3-isopropylmalate = (2S)-2-isopropylmalate. It participates in amino-acid biosynthesis; L-leucine biosynthesis; L-leucine from 3-methyl-2-oxobutanoate: step 2/4. Catalyzes the isomerization between 2-isopropylmalate and 3-isopropylmalate, via the formation of 2-isopropylmaleate. This is 3-isopropylmalate dehydratase large subunit 1 from Mannheimia succiniciproducens (strain KCTC 0769BP / MBEL55E).